Here is a 115-residue protein sequence, read N- to C-terminus: T cell receptor beta variable 16 (115 aa).

The N-terminal stretch at 1–20 (MSPIFTCITILCLLAAGSPG) is a signal peptide. The 95-residue stretch at 21–115 (EEVAQTPKHL…SAVYFCASSQ (95 aa)) folds into the Ig-like domain. A disulfide bond links Cys-42 and Cys-111.

In terms of assembly, alpha-beta TR is a heterodimer composed of an alpha and beta chain; disulfide-linked. The alpha-beta TR is associated with the transmembrane signaling CD3 coreceptor proteins to form the TR-CD3 (TcR or TCR). The assembly of alpha-beta TR heterodimers with CD3 occurs in the endoplasmic reticulum where a single alpha-beta TR heterodimer associates with one CD3D-CD3E heterodimer, one CD3G-CD3E heterodimer and one CD247 homodimer forming a stable octameric structure. CD3D-CD3E and CD3G-CD3E heterodimers preferentially associate with TR alpha and TR beta chains, respectively. The association of the CD247 homodimer is the last step of TcR assembly in the endoplasmic reticulum and is required for transport to the cell surface.

Its subcellular location is the cell membrane. V region of the variable domain of T cell receptor (TR) beta chain that participates in the antigen recognition. Alpha-beta T cell receptors are antigen specific receptors which are essential to the immune response and are present on the cell surface of T lymphocytes. Recognize peptide-major histocompatibility (MH) (pMH) complexes that are displayed by antigen presenting cells (APC), a prerequisite for efficient T cell adaptive immunity against pathogens. Binding of alpha-beta TR to pMH complex initiates TR-CD3 clustering on the cell surface and intracellular activation of LCK that phosphorylates the ITAM motifs of CD3G, CD3D, CD3E and CD247 enabling the recruitment of ZAP70. In turn ZAP70 phosphorylates LAT, which recruits numerous signaling molecules to form the LAT signalosome. The LAT signalosome propagates signal branching to three major signaling pathways, the calcium, the mitogen-activated protein kinase (MAPK) kinase and the nuclear factor NF-kappa-B (NF-kB) pathways, leading to the mobilization of transcription factors that are critical for gene expression and essential for T cell growth and differentiation. The T cell repertoire is generated in the thymus, by V-(D)-J rearrangement. This repertoire is then shaped by intrathymic selection events to generate a peripheral T cell pool of self-MH restricted, non-autoaggressive T cells. Post-thymic interaction of alpha-beta TR with the pMH complexes shapes TR structural and functional avidity. In Homo sapiens (Human), this protein is T cell receptor beta variable 16.